Here is a 204-residue protein sequence, read N- to C-terminus: Heart- and neural crest derivatives-expressed protein 1 (204 aa).

Disordered stretches follow at residues 1–24 (MNLVGSYAHHHHHHHHHHHPHPAH), 57–115 (APDF…RTES), and 172–204 (LKKADGGRESKRKRELQQHEGFPPALGPGEKRD). 2 stretches are compositionally biased toward basic residues: residues 8 to 22 (AHHHHHHHHHHHPHP) and 98 to 110 (LGRRKGSGPKKER). Positions 100–152 (RRKGSGPKKERRRTESINSAFAELRECIPNVPADTKLSKIKTLRLATSYIAYL) constitute a bHLH domain. The residue at position 113 (T113) is a Phosphothreonine; by PLK4. The residue at position 115 (S115) is a Phosphoserine; by PLK4.

Efficient DNA binding requires dimerization with another bHLH protein. Forms homodimers and heterodimers with TCF3 gene products E12 and E47, HAND2 and HEY1, HEY2 and HEYL (hairy-related transcription factors). Interacts with MDFIC. Interacts with SOX15; the interaction enhances HAND1-induced differentiation of trophoblast giant cells. In terms of processing, phosphorylation by PLK4 disrupts the interaction with MDFIC and leads to translocation into the nucleoplasm, allowing dimerization and transcription factor activity.

The protein resides in the nucleus. It is found in the nucleoplasm. The protein localises to the nucleolus. Its function is as follows. Transcription factor that plays an essential role in both trophoblast giant cell differentiation and in cardiac morphogenesis. Binds the DNA sequence 5'-NRTCTG-3' (non-canonical E-box). Acts as a transcriptional repressor of SOX15. In the adult, could be required for ongoing expression of cardiac-specific genes. The sequence is that of Heart- and neural crest derivatives-expressed protein 1 (HAND1) from Ovis aries (Sheep).